The following is a 417-amino-acid chain: 4-hydroxy-3-methylbut-2-enyl diphosphate reductase (417 aa).

C56 is a [4Fe-4S] cluster binding site. H86 contacts (2E)-4-hydroxy-3-methylbut-2-enyl diphosphate. Dimethylallyl diphosphate is bound at residue H86. Isopentenyl diphosphate is bound at residue H86. C151 serves as a coordination point for [4Fe-4S] cluster. H179 lines the (2E)-4-hydroxy-3-methylbut-2-enyl diphosphate pocket. H179 contacts dimethylallyl diphosphate. Position 179 (H179) interacts with isopentenyl diphosphate. The active-site Proton donor is the E181. Position 244 (T244) interacts with (2E)-4-hydroxy-3-methylbut-2-enyl diphosphate. Position 282 (C282) interacts with [4Fe-4S] cluster. (2E)-4-hydroxy-3-methylbut-2-enyl diphosphate is bound by residues S311, S312, N313, and S374. Residues S311, S312, N313, and S374 each coordinate dimethylallyl diphosphate. Isopentenyl diphosphate is bound by residues S311, S312, N313, and S374.

This sequence belongs to the IspH family. It depends on [4Fe-4S] cluster as a cofactor.

The catalysed reaction is isopentenyl diphosphate + 2 oxidized [2Fe-2S]-[ferredoxin] + H2O = (2E)-4-hydroxy-3-methylbut-2-enyl diphosphate + 2 reduced [2Fe-2S]-[ferredoxin] + 2 H(+). The enzyme catalyses dimethylallyl diphosphate + 2 oxidized [2Fe-2S]-[ferredoxin] + H2O = (2E)-4-hydroxy-3-methylbut-2-enyl diphosphate + 2 reduced [2Fe-2S]-[ferredoxin] + 2 H(+). Its pathway is isoprenoid biosynthesis; dimethylallyl diphosphate biosynthesis; dimethylallyl diphosphate from (2E)-4-hydroxy-3-methylbutenyl diphosphate: step 1/1. It functions in the pathway isoprenoid biosynthesis; isopentenyl diphosphate biosynthesis via DXP pathway; isopentenyl diphosphate from 1-deoxy-D-xylulose 5-phosphate: step 6/6. Functionally, catalyzes the conversion of 1-hydroxy-2-methyl-2-(E)-butenyl 4-diphosphate (HMBPP) into a mixture of isopentenyl diphosphate (IPP) and dimethylallyl diphosphate (DMAPP). Acts in the terminal step of the DOXP/MEP pathway for isoprenoid precursor biosynthesis. This Gloeobacter violaceus (strain ATCC 29082 / PCC 7421) protein is 4-hydroxy-3-methylbut-2-enyl diphosphate reductase.